The following is a 403-amino-acid chain: Para-nitrophenol 4-monooxygenase (403 aa).

Residues 6–35 (GVVV…VLEA) and 279–289 (FRRGRVVLAGD) each bind FAD.

This sequence belongs to the PheA/TfdB FAD monooxygenase family. As to quaternary structure, monomer. The cofactor is FAD.

It carries out the reaction 4-nitrophenol + NADPH + O2 + H(+) = 1,4-benzoquinone + nitrite + NADP(+) + H2O. Its pathway is xenobiotic degradation; 4-nitrophenol degradation. In terms of biological role, involved in the degradation of para-nitrophenol (4-NP). Catalyzes oxidation of 4-nitrophenol (4-NP) at position 4 with concomitant removal of the nitro group as nitrite and production of para-benzoquinone. This is Para-nitrophenol 4-monooxygenase (pnpA) from Pseudomonas sp. (strain WBC-3).